A 485-amino-acid chain; its full sequence is NADH-quinone oxidoreductase subunit N (485 aa).

14 helical membrane-spanning segments follow: residues 8 to 28, 35 to 55, 71 to 91, 105 to 125, 127 to 147, 159 to 179, 203 to 223, 235 to 255, 271 to 291, 297 to 317, 326 to 346, 373 to 393, 408 to 430, and 450 to 470; these read LIALLPLLIVGLTVVVVMLSI, FLNATLSVIGLNAALVSLWFV, GFAMLYTGLVLLASLATCTFA, FYLLVLIAALGGILLANANHL, SLFLGIELISLPLFGLVGYAF, YTILSAAASSFLLFGMALVYA, LLAGFGMMIVGLGFKLSLVPF, PAPVSTFLATASKIAIFGVVM, VVLAIIAFASIIFGNLMALSQ, LLGYSSISHLGYLLVALIALQ, VGVYLAGYLFSSLGAFGVVSL, AAVMTVMMLSLAGIPMTLGFI, WWLVGAVVVGSAIGLYYYLRVAV, and YSAGGIVVLISALLVLVLGVW.

Belongs to the complex I subunit 2 family. In terms of assembly, NDH-1 is composed of 13 different subunits. Subunits NuoA, H, J, K, L, M, N constitute the membrane sector of the complex.

The protein resides in the cell inner membrane. The catalysed reaction is a quinone + NADH + 5 H(+)(in) = a quinol + NAD(+) + 4 H(+)(out). NDH-1 shuttles electrons from NADH, via FMN and iron-sulfur (Fe-S) centers, to quinones in the respiratory chain. The immediate electron acceptor for the enzyme in this species is believed to be ubiquinone. Couples the redox reaction to proton translocation (for every two electrons transferred, four hydrogen ions are translocated across the cytoplasmic membrane), and thus conserves the redox energy in a proton gradient. This chain is NADH-quinone oxidoreductase subunit N, found in Shigella boydii serotype 4 (strain Sb227).